We begin with the raw amino-acid sequence, 422 residues long: Ubiquitin-conjugating enzyme E2 Q1 (422 aa).

Residue M1 is modified to N-acetylmethionine. Over residues M1 to A24 the composition is skewed to low complexity. 2 disordered regions span residues M1–C40 and Q173–G221. Residues P25–P35 show a composition bias toward gly residues. Acidic residues predominate over residues V185 to D200. The segment covering A212–G221 has biased composition (basic and acidic residues). The region spanning Q251–Y415 is the UBC core domain. C351 functions as the Glycyl thioester intermediate in the catalytic mechanism.

The protein belongs to the ubiquitin-conjugating enzyme family. In terms of assembly, monomer and homodimer. Only the homodimer is linked to ubiquitin through thiolester activation. Interacts (via N-terminus) with B4GALT1 (via N-terminal cytoplasmic domain); the interaction is direct. In terms of processing, autoubiquitinated in vitro in the presence of NEDD4L. Expressed in liver, brain, heart, spleen, lung, kidney, muscle, ovary, epididymis, testis and placenta. Also expressed in thymus and ES cells. Only expressed in the uterus during pregnancy. Expressed in oocytes and during subsequent embryonic development stages (4-cell stage, blastocyst, 8.5 dpc, 13.5 dpc, 16.5 dpc and 18.5 dpc).

It is found in the nucleus. It localises to the cell projection. The protein localises to the filopodium. Its subcellular location is the cytoplasm. The protein resides in the cytosol. The enzyme catalyses S-ubiquitinyl-[E1 ubiquitin-activating enzyme]-L-cysteine + [E2 ubiquitin-conjugating enzyme]-L-cysteine = [E1 ubiquitin-activating enzyme]-L-cysteine + S-ubiquitinyl-[E2 ubiquitin-conjugating enzyme]-L-cysteine.. Its pathway is protein modification; protein ubiquitination. In terms of biological role, catalyzes the covalent attachment of ubiquitin to other proteins. Involved in female fertility and embryo implantation. May be involved in hormonal homeostasis in females. Involved in regulation of B4GALT1 cell surface expression, B4GALT1-mediated cell adhesion to laminin and embryoid body formation. This Mus musculus (Mouse) protein is Ubiquitin-conjugating enzyme E2 Q1 (Ube2q1).